We begin with the raw amino-acid sequence, 367 residues long: Avirulence protein ATR5 (367 aa).

The N-terminal stretch at 1–16 (MRLISPALVVSTAIQA) is a signal peptide. N20 carries N-linked (GlcNAc...) asparagine glycosylation. The tract at residues 33 to 65 (NPLASAHPPDVGYDGVPAGRVRNPDDPTTEERT) is disordered. The segment covering 54–65 (RNPDDPTTEERT) has biased composition (basic and acidic residues). The dEER signature appears at 61-64 (TEER).

The protein belongs to the RxLR effector family.

The protein localises to the secreted. The protein resides in the host cell. Its function is as follows. Secreted effector that acts as an elicitor of hypersensitive response (HR) specifically on plants carrying defense protein RPP5. The protein is Avirulence protein ATR5 of Hyaloperonospora arabidopsidis (strain Emoy2) (Downy mildew agent).